The primary structure comprises 56 residues: Small ribosomal subunit protein uS14 (56 aa).

Zn(2+) contacts are provided by Cys21, Cys24, Cys39, and Cys42.

Belongs to the universal ribosomal protein uS14 family. In terms of assembly, component of the 40S small ribosomal subunit. Zn(2+) is required as a cofactor.

It localises to the cytoplasm. It is found in the cytosol. Its subcellular location is the rough endoplasmic reticulum. The polypeptide is Small ribosomal subunit protein uS14 (RpS29) (Plutella xylostella (Diamondback moth)).